The following is a 150-amino-acid chain: UPF0178 protein HCH_06960 (150 aa).

The protein belongs to the UPF0178 family.

In Hahella chejuensis (strain KCTC 2396), this protein is UPF0178 protein HCH_06960.